A 644-amino-acid chain; its full sequence is uncharacterized protein (644 aa).

The disordered stretch occupies residues 1–35; that stretch reads MKANGLDNDPARTGMERTDIDSEHPEAQPLLNNNH. Over 1-90 the chain is Cytoplasmic; sequence MKANGLDNDP…ILNILILINT (90 aa). The span at 14 to 26 shows a compositional bias: basic and acidic residues; the sequence is GMERTDIDSEHPE. Residues Ser22, Ser56, and Ser63 each carry the phosphoserine modification. The chain crosses the membrane as a helical span at residues 91-111; it reads IWLVTTLISDFFFNINILFGF. Topologically, residues 112 to 122 are vacuolar; sequence SNRYASFNDLT. Residues 123-143 traverse the membrane as a helical segment; it reads LIFISIIANSFNLWFNKLGLY. At 144-147 the chain is on the cytoplasmic side; that stretch reads SALD. Residues 148-168 form a helical membrane-spanning segment; that stretch reads YSLNVTLCVLTLFNLALTYLI. Over 169-174 the chain is Vacuolar; the sequence is KYTRQR. The chain crosses the membrane as a helical span at residues 175 to 195; the sequence is IGFVGTFTYLWTSFSFFIGAI. The Cytoplasmic portion of the chain corresponds to 196-271; it reads LDWYLLFYNN…EWVSIGFRNT (76 aa). A disordered region spans residues 225–251; the sequence is NENHTNSTENRDRSQYGSGSPTPTHRS. Residues 239–251 show a composition bias toward polar residues; sequence QYGSGSPTPTHRS. Ser244 is modified (phosphoserine). The chain crosses the membrane as a helical span at residues 272–292; that stretch reads IKFLILIFFALFTLNTLLTTL. Residues 293–644 are Vacuolar-facing; it reads DTYRLTHKLP…IGELGKLTED (352 aa). An AB hydrolase-1 domain is found at 348 to 619; sequence PIILFEHGGY…IVEGGHEIYK (272 aa). The disordered stretch occupies residues 469–492; that stretch reads GRGDGDDGDDGNGNDGDGRNHDKT.

The protein localises to the vacuole membrane. This is an uncharacterized protein from Saccharomyces cerevisiae (strain ATCC 204508 / S288c) (Baker's yeast).